The chain runs to 167 residues: Endoribonuclease YbeY (167 aa).

Residues H132, H136, and H142 each contribute to the Zn(2+) site.

Belongs to the endoribonuclease YbeY family. The cofactor is Zn(2+).

The protein localises to the cytoplasm. Its function is as follows. Single strand-specific metallo-endoribonuclease involved in late-stage 70S ribosome quality control and in maturation of the 3' terminus of the 16S rRNA. The protein is Endoribonuclease YbeY of Clostridium tetani (strain Massachusetts / E88).